A 153-amino-acid polypeptide reads, in one-letter code: Deoxyuridine 5'-triphosphate nucleotidohydrolase (153 aa).

Substrate contacts are provided by residues 71 to 73, Asn-84, 88 to 90, and Lys-98; these read RSG and TID.

Belongs to the dUTPase family. Mg(2+) is required as a cofactor.

It catalyses the reaction dUTP + H2O = dUMP + diphosphate + H(+). Its pathway is pyrimidine metabolism; dUMP biosynthesis; dUMP from dCTP (dUTP route): step 2/2. This enzyme is involved in nucleotide metabolism: it produces dUMP, the immediate precursor of thymidine nucleotides and it decreases the intracellular concentration of dUTP so that uracil cannot be incorporated into DNA. In Wolbachia pipientis wMel, this protein is Deoxyuridine 5'-triphosphate nucleotidohydrolase.